The chain runs to 239 residues: Probable transcriptional regulator ycf27 (239 aa).

A Response regulatory domain is found at 7–120 (KILVVDDEIS…ELEARIRSLL (114 aa)). Asp56 is modified (4-aspartylphosphate). Positions 76 to 94 (DIPIIMLTALGDVADRITG) form a DNA-binding region, H-T-H motif. The segment at residues 135 to 236 (GENLQIGFLK…ARGIGYLFQN (102 aa)) is a DNA-binding region (ompR/PhoB-type).

It is found in the plastid. The protein resides in the cyanelle. In terms of biological role, probable promoter-specific protein mediating the interaction between DNA and RNA polymerase. This Cyanophora paradoxa protein is Probable transcriptional regulator ycf27 (ycf27).